We begin with the raw amino-acid sequence, 100 residues long: Elevenin (100 aa).

The N-terminal stretch at 1–24 (MALSQKALLVLVLSMLLTASDSWA) is a signal peptide. The cysteines at positions 29 and 38 are disulfide-linked. Residues 44 to 100 (KRGGDSLSVGGSAELDDTLTDPFLKSEEPKEWRELTRLSRVLQTFLSHPTGEMEQHD) constitute a propeptide that is removed on maturation.

Belongs to the elevenin family. Monomer. In terms of tissue distribution, expressed by the venom duct.

The protein resides in the secreted. May mimic the function of prey elevenin neuropeptide. In vivo, intracranial injection in mice induces hyperactivity. This chain is Elevenin, found in Conus ammiralis (Admiral cone).